Consider the following 281-residue polypeptide: Nucleoid occlusion protein (281 aa).

Positions 145-164 form a DNA-binding region, H-T-H motif; sequence EALAQRLGKGQSTIANKLRL.

It belongs to the ParB family.

The protein resides in the cytoplasm. It localises to the nucleoid. In terms of biological role, effects nucleoid occlusion by binding relatively nonspecifically to DNA and preventing the assembly of the division machinery in the vicinity of the nucleoid, especially under conditions that disturb the cell cycle. It helps to coordinate cell division and chromosome segregation by preventing the formation of the Z ring through the nucleoid, which would cause chromosome breakage. This is Nucleoid occlusion protein from Geobacillus sp. (strain WCH70).